Consider the following 350-residue polypeptide: Melatonin receptor type 1A (350 aa).

The Extracellular portion of the chain corresponds to 1–29 (MQGNGSALPNASQPVLRGDGARPSWLASA). N4 and N10 each carry an N-linked (GlcNAc...) asparagine glycan. Residues 30 to 50 (LACVLIFTIVVDILGNLLVIL) form a helical membrane-spanning segment. Residues 51–63 (SVYRNKKLRNAGN) are Cytoplasmic-facing. Residues 64–84 (IFVVSLAVADLVVAIYPYPLV) traverse the membrane as a helical segment. Topologically, residues 85 to 102 (LMSIFNNGWNLGYLHCQV) are extracellular. A disulfide bridge connects residues C100 and C177. A helical transmembrane segment spans residues 103 to 123 (SGFLMGLSVIGSIFNITGIAI). At 124–142 (NRYCYICHSLKYDKLYSSK) the chain is on the cytoplasmic side. A helical membrane pass occupies residues 143–163 (NSLCYVLLIWLLTLAAVLPNL). Residues N162 and Q181 each coordinate melatonin. Residues 164 to 187 (RAGTLQYDPRIYSCTFAQSVSSAY) lie on the Extracellular side of the membrane. The helical transmembrane segment at 188–208 (TIAVVVFHFLVPMIIVIFCYL) threads the bilayer. The Cytoplasmic segment spans residues 209–240 (RIWILVLQVRQRVKPDRKPKLKPQDFRNFVTM). Residues 241 to 261 (FVVFVLFAICWAPLNFIGLAV) traverse the membrane as a helical segment. The Extracellular portion of the chain corresponds to 262 to 274 (ASDPASMVPRIPE). The helical transmembrane segment at 275–295 (WLFVASYYMAYFNSCLNAIIY) threads the bilayer. The Cytoplasmic segment spans residues 296-350 (GLLNQNFRKEYRRIIVSLCTARVFFVDSSNDVADRVKWKPSPLMTNNNVVKVDSV).

It belongs to the G-protein coupled receptor 1 family. In terms of tissue distribution, expressed in hypophyseal pars tuberalis and hypothalamic suprachiasmatic nuclei (SCN). Hippocampus.

The protein localises to the cell membrane. Functionally, high affinity receptor for melatonin. Likely to mediate the reproductive and circadian actions of melatonin. The activity of this receptor is mediated by pertussis toxin sensitive G proteins that inhibit adenylate cyclase activity. Possibly involved in sleep induction, by melatonin activation of the potassium channel KCNMA1/BK and the dissociation of G-beta and G-gamma subunits, thereby decreasing synaptic transmission. In Homo sapiens (Human), this protein is Melatonin receptor type 1A (MTNR1A).